The following is a 394-amino-acid chain: GTPase Obg (394 aa).

The 159-residue stretch at 4-162 folds into the Obg domain; that stretch reads SNFVDYVKIY…LMVILELKLL (159 aa). The OBG-type G domain occupies 163–329; it reads ADVGLVGFPN…LKDILWTELN (167 aa). Residues 169 to 176, 194 to 198, 216 to 219, 283 to 286, and 310 to 312 contribute to the GTP site; these read GFPNAGKS, FTTLE, DIPG, TKSD, and SSV. Residues serine 176 and threonine 196 each contribute to the Mg(2+) site. The segment at 358–394 is disordered; sequence KDMGEDEDFEYEYEEDADDDFDYEYEDENWDEEEEKK. The segment covering 361 to 394 has biased composition (acidic residues); the sequence is GEDEDFEYEYEEDADDDFDYEYEDENWDEEEEKK.

It belongs to the TRAFAC class OBG-HflX-like GTPase superfamily. OBG GTPase family. As to quaternary structure, monomer. Mg(2+) is required as a cofactor.

It localises to the cytoplasm. Functionally, an essential GTPase which binds GTP, GDP and possibly (p)ppGpp with moderate affinity, with high nucleotide exchange rates and a fairly low GTP hydrolysis rate. Plays a role in control of the cell cycle, stress response, ribosome biogenesis and in those bacteria that undergo differentiation, in morphogenesis control. The chain is GTPase Obg from Phocaeicola vulgatus (strain ATCC 8482 / DSM 1447 / JCM 5826 / CCUG 4940 / NBRC 14291 / NCTC 11154) (Bacteroides vulgatus).